The chain runs to 432 residues: Enolase (432 aa).

Gln164 is a binding site for (2R)-2-phosphoglycerate. The Proton donor role is filled by Glu206. 3 residues coordinate Mg(2+): Asp243, Glu284, and Asp311. 4 residues coordinate (2R)-2-phosphoglycerate: Lys336, Arg365, Ser366, and Lys387. Lys336 functions as the Proton acceptor in the catalytic mechanism.

This sequence belongs to the enolase family. It depends on Mg(2+) as a cofactor.

The protein resides in the cytoplasm. The protein localises to the secreted. Its subcellular location is the cell surface. The enzyme catalyses (2R)-2-phosphoglycerate = phosphoenolpyruvate + H2O. The protein operates within carbohydrate degradation; glycolysis; pyruvate from D-glyceraldehyde 3-phosphate: step 4/5. Functionally, catalyzes the reversible conversion of 2-phosphoglycerate (2-PG) into phosphoenolpyruvate (PEP). It is essential for the degradation of carbohydrates via glycolysis. The protein is Enolase of Synechococcus sp. (strain JA-3-3Ab) (Cyanobacteria bacterium Yellowstone A-Prime).